The sequence spans 140 residues: UPF0102 protein ACIAD1132 (140 aa).

It belongs to the UPF0102 family.

This is UPF0102 protein ACIAD1132 from Acinetobacter baylyi (strain ATCC 33305 / BD413 / ADP1).